The following is a 140-amino-acid chain: TPT1-like protein (140 aa).

Residues 6–140 form the TCTP domain; it reads MITYWDLISH…LANFKNYQKT (135 aa).

The protein belongs to the TCTP family.

This Homo sapiens (Human) protein is TPT1-like protein.